A 263-amino-acid chain; its full sequence is HTH-type transcriptional repressor NanR (263 aa).

The interval 1-21 (MGLMNAFDSQTEDSSPVIGRN) is disordered. The HTH gntR-type domain occupies 30-98 (KKLSEMVEEE…NGERARVSRP (69 aa)). Residues 58-77 (ERELMAFFNVGRPSVREALA) constitute a DNA-binding region (H-T-H motif).

The protein belongs to the NanR family.

Its function is as follows. Transcriptional repressor that controls expression of the genes required for the catabolism of sialic acids. In Escherichia coli O7:K1 (strain IAI39 / ExPEC), this protein is HTH-type transcriptional repressor NanR.